A 274-amino-acid chain; its full sequence is Acyl-[acyl-carrier-protein]--UDP-N-acetylglucosamine O-acyltransferase (274 aa).

Belongs to the transferase hexapeptide repeat family. LpxA subfamily. Homotrimer.

The protein resides in the cytoplasm. The catalysed reaction is a (3R)-hydroxyacyl-[ACP] + UDP-N-acetyl-alpha-D-glucosamine = a UDP-3-O-[(3R)-3-hydroxyacyl]-N-acetyl-alpha-D-glucosamine + holo-[ACP]. The protein operates within glycolipid biosynthesis; lipid IV(A) biosynthesis; lipid IV(A) from (3R)-3-hydroxytetradecanoyl-[acyl-carrier-protein] and UDP-N-acetyl-alpha-D-glucosamine: step 1/6. Involved in the biosynthesis of lipid A, a phosphorylated glycolipid that anchors the lipopolysaccharide to the outer membrane of the cell. The protein is Acyl-[acyl-carrier-protein]--UDP-N-acetylglucosamine O-acyltransferase of Bartonella bacilliformis (strain ATCC 35685 / KC583 / Herrer 020/F12,63).